We begin with the raw amino-acid sequence, 126 residues long: 14 kDa phosphohistidine phosphatase (126 aa).

Lysine 22 provides a ligand contact to substrate. The active-site Proton acceptor is histidine 54. 95 to 97 (SMG) is a binding site for substrate.

Belongs to the janus family. As to quaternary structure, monomer.

The protein localises to the cytoplasm. The catalysed reaction is N(pros)-phospho-L-histidyl-[protein] + H2O = L-histidyl-[protein] + phosphate. The enzyme catalyses N(tele)-phospho-L-histidyl-[protein] + H2O = L-histidyl-[protein] + phosphate. In terms of biological role, exhibits phosphohistidine phosphatase activity. This Sus scrofa (Pig) protein is 14 kDa phosphohistidine phosphatase (PHPT1).